Here is a 541-residue protein sequence, read N- to C-terminus: Membrane protein insertase YidC (541 aa).

5 consecutive transmembrane segments (helical) span residues Leu-7–Tyr-27, Leu-345–Tyr-365, Leu-415–Phe-435, Leu-453–Leu-473, and Phe-492–Trp-512.

The protein belongs to the OXA1/ALB3/YidC family. Type 1 subfamily. Interacts with the Sec translocase complex via SecD. Specifically interacts with transmembrane segments of nascent integral membrane proteins during membrane integration.

It is found in the cell inner membrane. In terms of biological role, required for the insertion and/or proper folding and/or complex formation of integral membrane proteins into the membrane. Involved in integration of membrane proteins that insert both dependently and independently of the Sec translocase complex, as well as at least some lipoproteins. Aids folding of multispanning membrane proteins. This Histophilus somni (strain 2336) (Haemophilus somnus) protein is Membrane protein insertase YidC.